We begin with the raw amino-acid sequence, 254 residues long: Thiazole synthase (254 aa).

K96 serves as the catalytic Schiff-base intermediate with DXP. 1-deoxy-D-xylulose 5-phosphate contacts are provided by residues G157, 183–184 (AG), and 205–206 (NT).

This sequence belongs to the ThiG family. As to quaternary structure, homotetramer. Forms heterodimers with either ThiH or ThiS.

It is found in the cytoplasm. It carries out the reaction [ThiS sulfur-carrier protein]-C-terminal-Gly-aminoethanethioate + 2-iminoacetate + 1-deoxy-D-xylulose 5-phosphate = [ThiS sulfur-carrier protein]-C-terminal Gly-Gly + 2-[(2R,5Z)-2-carboxy-4-methylthiazol-5(2H)-ylidene]ethyl phosphate + 2 H2O + H(+). The protein operates within cofactor biosynthesis; thiamine diphosphate biosynthesis. Its function is as follows. Catalyzes the rearrangement of 1-deoxy-D-xylulose 5-phosphate (DXP) to produce the thiazole phosphate moiety of thiamine. Sulfur is provided by the thiocarboxylate moiety of the carrier protein ThiS. In vitro, sulfur can be provided by H(2)S. This is Thiazole synthase from Bacillus velezensis (strain DSM 23117 / BGSC 10A6 / LMG 26770 / FZB42) (Bacillus amyloliquefaciens subsp. plantarum).